Reading from the N-terminus, the 361-residue chain is MADRVYNFSAGPATLPFEVLEQAGKDIVNFKETGSGLIEISHRSPEFIEVIEKTESLVRELLEVPDNYKVLFLQGGASSQFFMVPMNLLGAGKKATYLNTGTWAKKAIKEAQLFGDIDVAYSSEESIFNHVPANDAYQVAEESEYLYFASNNTIYGTQFETMPQSKKMLVADMSSDIFSRKVDVSKFGLIFAGAQKNLGPAGVTLVIIRDDLLEKTPAHTPTMLSYKTHADKGSMFNTPPCFAIYVMGEVLAWLKNLGGVEKIEEINREKAALLYSQIDASDYYRVHAQDGSRSLMNVTFNLPTAELEAKFIAEASALQMKGLKGHRSIGGCRASIYNAFPREGVVKLVEFMQVFAANNPA.

L-glutamate is bound at residue Arg-43. Pyridoxal 5'-phosphate-binding positions include 77-78 (AS), Trp-103, Thr-153, Asp-172, and Gln-195. Lys-196 is modified (N6-(pyridoxal phosphate)lysine). 237–238 (NT) provides a ligand contact to pyridoxal 5'-phosphate.

It belongs to the class-V pyridoxal-phosphate-dependent aminotransferase family. SerC subfamily. In terms of assembly, homodimer. Pyridoxal 5'-phosphate is required as a cofactor.

Its subcellular location is the cytoplasm. The enzyme catalyses O-phospho-L-serine + 2-oxoglutarate = 3-phosphooxypyruvate + L-glutamate. It catalyses the reaction 4-(phosphooxy)-L-threonine + 2-oxoglutarate = (R)-3-hydroxy-2-oxo-4-phosphooxybutanoate + L-glutamate. Its pathway is amino-acid biosynthesis; L-serine biosynthesis; L-serine from 3-phospho-D-glycerate: step 2/3. The protein operates within cofactor biosynthesis; pyridoxine 5'-phosphate biosynthesis; pyridoxine 5'-phosphate from D-erythrose 4-phosphate: step 3/5. In terms of biological role, catalyzes the reversible conversion of 3-phosphohydroxypyruvate to phosphoserine and of 3-hydroxy-2-oxo-4-phosphonooxybutanoate to phosphohydroxythreonine. This is Phosphoserine aminotransferase from Desulfotalea psychrophila (strain LSv54 / DSM 12343).